The primary structure comprises 469 residues: Neuraminidase (469 aa).

Residues 1–9 (MNPNQKIIT) lie on the Intravirion side of the membrane. The helical transmembrane segment at 10 to 30 (IGSVSLTIATVCFLMQIAILV) threads the bilayer. The tract at residues 11 to 33 (GSVSLTIATVCFLMQIAILVTTV) is involved in apical transport and lipid raft association. At 31-469 (TTVTLHFKQH…DGANINFMPI (439 aa)) the chain is on the virion surface side. A hypervariable stalk region region spans residues 36 to 88 (HFKQHECDSPASNQVMPCEPIIIERNITEIVYLNNTTIEKEICPKVVEYRNWS). 4 N-linked (GlcNAc...) asparagine; by host glycosylation sites follow: Asn61, Asn69, Asn70, and Asn86. Positions 91-469 (QCQITGFAPF…DGANINFMPI (379 aa)) are head of neuraminidase. 9 cysteine pairs are disulfide-bonded: Cys92–Cys417, Cys124–Cys129, Cys175–Cys193, Cys183–Cys230, Cys232–Cys237, Cys278–Cys291, Cys280–Cys289, Cys318–Cys337, and Cys421–Cys447. Arg118 contributes to the substrate binding site. Asn146 carries an N-linked (GlcNAc...) asparagine; by host glycan. Asp151 serves as the catalytic Proton donor/acceptor. Substrate is bound at residue Arg152. N-linked (GlcNAc...) asparagine; by host glycans are attached at residues Asn200 and Asn234. 276–277 (EE) provides a ligand contact to substrate. Arg292 serves as a coordination point for substrate. Ca(2+) is bound by residues Asp293, Gly297, and Asp324. Residues 324-349 (DTPRNDDRSSNSNCRNPNNERGTQGV) form a disordered region. Low complexity predominate over residues 333 to 342 (SNSNCRNPNN). Residues Gly345, Thr346, and Gln347 each contribute to the Ca(2+) site. Arg371 is a binding site for substrate. A glycan (N-linked (GlcNAc...) asparagine; by host) is linked at Asn402. The active-site Nucleophile is Tyr406.

The protein belongs to the glycosyl hydrolase 34 family. As to quaternary structure, homotetramer. Ca(2+) is required as a cofactor. Post-translationally, N-glycosylated.

Its subcellular location is the virion membrane. The protein resides in the host apical cell membrane. The enzyme catalyses Hydrolysis of alpha-(2-&gt;3)-, alpha-(2-&gt;6)-, alpha-(2-&gt;8)- glycosidic linkages of terminal sialic acid residues in oligosaccharides, glycoproteins, glycolipids, colominic acid and synthetic substrates.. Its activity is regulated as follows. Inhibited by the neuraminidase inhibitors zanamivir (Relenza) and oseltamivir (Tamiflu). These drugs interfere with the release of progeny virus from infected cells and are effective against all influenza strains. Resistance to neuraminidase inhibitors is quite rare. Functionally, catalyzes the removal of terminal sialic acid residues from viral and cellular glycoconjugates. Cleaves off the terminal sialic acids on the glycosylated HA during virus budding to facilitate virus release. Additionally helps virus spread through the circulation by further removing sialic acids from the cell surface. These cleavages prevent self-aggregation and ensure the efficient spread of the progeny virus from cell to cell. Otherwise, infection would be limited to one round of replication. Described as a receptor-destroying enzyme because it cleaves a terminal sialic acid from the cellular receptors. May facilitate viral invasion of the upper airways by cleaving the sialic acid moieties on the mucin of the airway epithelial cells. Likely to plays a role in the budding process through its association with lipid rafts during intracellular transport. May additionally display a raft-association independent effect on budding. Plays a role in the determination of host range restriction on replication and virulence. Sialidase activity in late endosome/lysosome traffic seems to enhance virus replication. The polypeptide is Neuraminidase (Aves (Human)).